Consider the following 197-residue polypeptide: Large ribosomal subunit protein bL25 (197 aa).

The protein belongs to the bacterial ribosomal protein bL25 family. CTC subfamily. In terms of assembly, part of the 50S ribosomal subunit; part of the 5S rRNA/L5/L18/L25 subcomplex. Contacts the 5S rRNA. Binds to the 5S rRNA independently of L5 and L18.

Its function is as follows. This is one of the proteins that binds to the 5S RNA in the ribosome where it forms part of the central protuberance. The sequence is that of Large ribosomal subunit protein bL25 from Carboxydothermus hydrogenoformans (strain ATCC BAA-161 / DSM 6008 / Z-2901).